Consider the following 375-residue polypeptide: Pulmonary surfactant-associated protein D (375 aa).

Positions Met1–Glu20 are cleaved as a signal peptide. Cys35 and Cys40 each carry S-nitrosocysteine. Residues Ser45 to Leu221 form a disordered region. One can recognise a Collagen-like domain in the interval Gly46 to Pro222. Residues Arg50–Asp65 show a composition bias toward basic and acidic residues. The span at Pro66–Pro86 shows a compositional bias: low complexity. Pro78 carries the 4-hydroxyproline modification. Lys87 is modified (5-hydroxylysine). The N-linked (GlcNAc...) asparagine glycan is linked to Asn90. 4-hydroxyproline is present on Pro96. Lys99 is modified (5-hydroxylysine). Residues Ser105 to Pro114 show a composition bias toward pro residues. 2 stretches are compositionally biased toward low complexity: residues Pro116–Gln132 and Lys138–Pro150. 4-hydroxyproline is present on residues Pro171 and Pro177. A compositionally biased stretch (basic and acidic residues) spans Lys204–Lys216. Residues Asp223–Glu252 adopt a coiled-coil conformation. Residues Val260–Phe375 form the C-type lectin domain. 2 disulfide bridges follow: Cys281/Cys373 and Cys351/Cys365.

This sequence belongs to the SFTPD family. In terms of assembly, oligomeric complex of 4 set of homotrimers. Post-translationally, the N-terminus is blocked. In terms of processing, hydroxylation on proline residues within the sequence motif, GXPG, is most likely to be 4-hydroxy as this fits the requirement for 4-hydroxylation in vertebrates. S-nitrosylation at Cys-35 and Cys-40 alters the quaternary structure which results in a pro-inflammatory chemoattractive signaling activity with macrophages. Expressed in lung, brain, pancreas and adipose tissue (mainly mature adipocytes).

It localises to the secreted. The protein localises to the extracellular space. It is found in the extracellular matrix. The protein resides in the surface film. Functionally, contributes to the lung's defense against inhaled microorganisms, organic antigens and toxins. Interacts with compounds such as bacterial lipopolysaccharides, oligosaccharides and fatty acids and modulates leukocyte action in immune response. May participate in the extracellular reorganization or turnover of pulmonary surfactant. Binds strongly maltose residues and to a lesser extent other alpha-glucosyl moieties. This Homo sapiens (Human) protein is Pulmonary surfactant-associated protein D (SFTPD).